The following is a 129-amino-acid chain: Small ribosomal subunit protein uS11 (129 aa).

It belongs to the universal ribosomal protein uS11 family. As to quaternary structure, part of the 30S ribosomal subunit. Interacts with proteins S7 and S18. Binds to IF-3.

Located on the platform of the 30S subunit, it bridges several disparate RNA helices of the 16S rRNA. Forms part of the Shine-Dalgarno cleft in the 70S ribosome. In Oceanobacillus iheyensis (strain DSM 14371 / CIP 107618 / JCM 11309 / KCTC 3954 / HTE831), this protein is Small ribosomal subunit protein uS11.